A 287-amino-acid polypeptide reads, in one-letter code: Ciliary microtubule inner protein 6 (287 aa).

2 stretches are compositionally biased toward basic and acidic residues: residues 1-15 and 25-34; these read MEEK…KIED and EEIKHEEKPG. The segment at 1 to 42 is disordered; the sequence is MEEKEDKHQQHKIEDAAITYVSENEEIKHEEKPGKSIHHSKS. Residues 128–160 are mn 1; it reads GIVPLASPGTSAELQNNFIEYISFIHQYDARKT. The disordered stretch occupies residues 179-287; the sequence is KPGSRPTVPK…PLNPPIKKSE (109 aa). Basic and acidic residues-rich tracts occupy residues 203-212 and 232-245; these read EQSKKTEKGN and LEPK…DVRQ. Residues 213 to 246 are mn 2; it reads SAESRMISPGLCQQNSQELLEPKTHLSETDVRQA.

The protein resides in the cell projection. The protein localises to the cilium. This chain is Ciliary microtubule inner protein 6, found in Homo sapiens (Human).